The following is a 200-amino-acid chain: 3-isopropylmalate dehydratase small subunit (200 aa).

It belongs to the LeuD family. LeuD type 1 subfamily. As to quaternary structure, heterodimer of LeuC and LeuD.

The catalysed reaction is (2R,3S)-3-isopropylmalate = (2S)-2-isopropylmalate. It functions in the pathway amino-acid biosynthesis; L-leucine biosynthesis; L-leucine from 3-methyl-2-oxobutanoate: step 2/4. In terms of biological role, catalyzes the isomerization between 2-isopropylmalate and 3-isopropylmalate, via the formation of 2-isopropylmaleate. The chain is 3-isopropylmalate dehydratase small subunit from Haemophilus influenzae (strain PittEE).